A 600-amino-acid chain; its full sequence is Methionine--tRNA ligase (600 aa).

Residues 11–21 carry the 'HIGH' region motif; the sequence is PYANGPRHIGH. Zn(2+) is bound by residues Cys-143, Cys-146, Cys-156, and Cys-159. Residues 351–355 carry the 'KMSKS' region motif; that stretch reads KFSSS. Ser-354 provides a ligand contact to ATP.

It belongs to the class-I aminoacyl-tRNA synthetase family. MetG type 1 subfamily. As to quaternary structure, monomer. Zn(2+) is required as a cofactor.

The protein localises to the cytoplasm. It carries out the reaction tRNA(Met) + L-methionine + ATP = L-methionyl-tRNA(Met) + AMP + diphosphate. Its function is as follows. Is required not only for elongation of protein synthesis but also for the initiation of all mRNA translation through initiator tRNA(fMet) aminoacylation. The chain is Methionine--tRNA ligase from Salinispora arenicola (strain CNS-205).